A 119-amino-acid polypeptide reads, in one-letter code: uncharacterized protein (119 aa).

This is an uncharacterized protein from Schizosaccharomyces pombe (strain 972 / ATCC 24843) (Fission yeast).